The sequence spans 204 residues: MDRVVLLLSVLSLGVSSQPITDSQRLFSIAVSRVQHLHLLAQRRFSEFESSLQTEEQRQLNKIFLQDFCNSDYIISPIDKHETQRSSVLKLLSISYRLVESWEFSSRSLSGGSAPRDQISPKLSELKTGILLLIRANQDGAEMFSDSSALQLAPYGNYYQSLGADESLRRTYELLACFKKDMHKVETYLTVAKCRLSPEANCTL.

A signal peptide spans 1 to 17 (MDRVVLLLSVLSLGVSS). Q18 carries the pyrrolidone carboxylic acid modification. H36 provides a ligand contact to Zn(2+). C69 and C177 form a disulfide bridge. A Zn(2+)-binding site is contributed by E186. C194 and C202 are joined by a disulfide.

This sequence belongs to the somatotropin/prolactin family.

The protein localises to the secreted. Functionally, growth hormone plays an important role in growth control and is involved in the regulation of several anabolic processes. Implicated as an osmoregulatory substance important for seawater adaptation. In Lates calcarifer (Barramundi), this protein is Somatotropin (gh).